The chain runs to 302 residues: Ribosomal protein L11 methyltransferase (302 aa).

S-adenosyl-L-methionine contacts are provided by Thr-155, Gly-176, Asp-198, and Asn-239.

This sequence belongs to the methyltransferase superfamily. PrmA family.

Its subcellular location is the cytoplasm. It catalyses the reaction L-lysyl-[protein] + 3 S-adenosyl-L-methionine = N(6),N(6),N(6)-trimethyl-L-lysyl-[protein] + 3 S-adenosyl-L-homocysteine + 3 H(+). Functionally, methylates ribosomal protein L11. This Caldicellulosiruptor saccharolyticus (strain ATCC 43494 / DSM 8903 / Tp8T 6331) protein is Ribosomal protein L11 methyltransferase.